The following is a 369-amino-acid chain: tRNA/tmRNA (uracil-C(5))-methyltransferase (369 aa).

Residues Gln-193, Tyr-221, Asn-226, Glu-242, and Asp-302 each contribute to the S-adenosyl-L-methionine site. The active-site Nucleophile is Cys-327. Glu-361 functions as the Proton acceptor in the catalytic mechanism.

The protein belongs to the class I-like SAM-binding methyltransferase superfamily. RNA M5U methyltransferase family. TrmA subfamily.

It catalyses the reaction uridine(54) in tRNA + S-adenosyl-L-methionine = 5-methyluridine(54) in tRNA + S-adenosyl-L-homocysteine + H(+). It carries out the reaction uridine(341) in tmRNA + S-adenosyl-L-methionine = 5-methyluridine(341) in tmRNA + S-adenosyl-L-homocysteine + H(+). Functionally, dual-specificity methyltransferase that catalyzes the formation of 5-methyluridine at position 54 (m5U54) in all tRNAs, and that of position 341 (m5U341) in tmRNA (transfer-mRNA). The sequence is that of tRNA/tmRNA (uracil-C(5))-methyltransferase from Actinobacillus succinogenes (strain ATCC 55618 / DSM 22257 / CCUG 43843 / 130Z).